The following is a 158-amino-acid chain: Large ribosomal subunit protein bL17 (158 aa).

The interval 119–158 (APAAAPEAEEKGEKKAAKAPKAEKAPKAEKKPAKKAAKAE) is disordered. Residues 126–158 (AEEKGEKKAAKAPKAEKAPKAEKKPAKKAAKAE) are compositionally biased toward basic and acidic residues.

Belongs to the bacterial ribosomal protein bL17 family. In terms of assembly, part of the 50S ribosomal subunit. Contacts protein L32.

This Anaeromyxobacter sp. (strain K) protein is Large ribosomal subunit protein bL17.